A 550-amino-acid chain; its full sequence is Hydroxylamine reductase (550 aa).

The [2Fe-2S] cluster site is built by Cys-3, Cys-6, Cys-18, and Cys-25. Positions 249, 273, 317, 405, 433, 458, 492, and 494 each coordinate hybrid [4Fe-2O-2S] cluster. Position 405 is a cysteine persulfide (Cys-405).

Belongs to the HCP family. [2Fe-2S] cluster is required as a cofactor. Requires hybrid [4Fe-2O-2S] cluster as cofactor.

The protein resides in the cytoplasm. It carries out the reaction A + NH4(+) + H2O = hydroxylamine + AH2 + H(+). Catalyzes the reduction of hydroxylamine to form NH(3) and H(2)O. The protein is Hydroxylamine reductase of Proteus mirabilis (strain HI4320).